We begin with the raw amino-acid sequence, 160 residues long: 6,7-dimethyl-8-ribityllumazine synthase (160 aa).

5-amino-6-(D-ribitylamino)uracil is bound by residues W28, 59 to 61 (SFE), and 82 to 84 (VII). Residue 87–88 (GT) participates in (2S)-2-hydroxy-3-oxobutyl phosphate binding. Residue H90 is the Proton donor of the active site. F115 provides a ligand contact to 5-amino-6-(D-ribitylamino)uracil. R129 provides a ligand contact to (2S)-2-hydroxy-3-oxobutyl phosphate.

This sequence belongs to the DMRL synthase family.

It carries out the reaction (2S)-2-hydroxy-3-oxobutyl phosphate + 5-amino-6-(D-ribitylamino)uracil = 6,7-dimethyl-8-(1-D-ribityl)lumazine + phosphate + 2 H2O + H(+). It functions in the pathway cofactor biosynthesis; riboflavin biosynthesis; riboflavin from 2-hydroxy-3-oxobutyl phosphate and 5-amino-6-(D-ribitylamino)uracil: step 1/2. In terms of biological role, catalyzes the formation of 6,7-dimethyl-8-ribityllumazine by condensation of 5-amino-6-(D-ribitylamino)uracil with 3,4-dihydroxy-2-butanone 4-phosphate. This is the penultimate step in the biosynthesis of riboflavin. The polypeptide is 6,7-dimethyl-8-ribityllumazine synthase (Clavibacter sepedonicus (Clavibacter michiganensis subsp. sepedonicus)).